A 62-amino-acid chain; its full sequence is MKASELRDLTVEELEKKVEELNQELFNLKFQLATGQLENSARLPQTRRDIARVHTVLRQKRS.

Belongs to the universal ribosomal protein uL29 family.

This chain is Large ribosomal subunit protein uL29, found in Syntrophotalea carbinolica (strain DSM 2380 / NBRC 103641 / GraBd1) (Pelobacter carbinolicus).